Here is a 313-residue protein sequence, read N- to C-terminus: Protein FixB (313 aa).

An FAD-binding site is contributed by 255-283 (LYLAVGISGQIQHMVGANASQTIFAINKD).

Belongs to the ETF alpha-subunit/FixB family. Heterodimer of FixA and FixB.

The protein operates within amine and polyamine metabolism; carnitine metabolism. Functionally, required for anaerobic carnitine reduction. May bring reductant to CaiA. The sequence is that of Protein FixB from Escherichia coli O1:K1 / APEC.